Reading from the N-terminus, the 31-residue chain is Cytochrome b6-f complex subunit 6 (31 aa).

A helical membrane pass occupies residues 4 to 24 (LTSYFGFLLAALTITLALFIG).

This sequence belongs to the PetL family. As to quaternary structure, the 4 large subunits of the cytochrome b6-f complex are cytochrome b6, subunit IV (17 kDa polypeptide, PetD), cytochrome f and the Rieske protein, while the 4 small subunits are PetG, PetL, PetM and PetN. The complex functions as a dimer.

It localises to the plastid. The protein resides in the chloroplast thylakoid membrane. Its function is as follows. Component of the cytochrome b6-f complex, which mediates electron transfer between photosystem II (PSII) and photosystem I (PSI), cyclic electron flow around PSI, and state transitions. PetL is important for photoautotrophic growth as well as for electron transfer efficiency and stability of the cytochrome b6-f complex. The polypeptide is Cytochrome b6-f complex subunit 6 (Triticum aestivum (Wheat)).